The sequence spans 313 residues: Ribosomal RNA small subunit methyltransferase H (313 aa).

S-adenosyl-L-methionine is bound by residues 35–37 (GGY), aspartate 53, phenylalanine 80, aspartate 101, and glutamine 108.

The protein belongs to the methyltransferase superfamily. RsmH family.

Its subcellular location is the cytoplasm. The catalysed reaction is cytidine(1402) in 16S rRNA + S-adenosyl-L-methionine = N(4)-methylcytidine(1402) in 16S rRNA + S-adenosyl-L-homocysteine + H(+). Its function is as follows. Specifically methylates the N4 position of cytidine in position 1402 (C1402) of 16S rRNA. The protein is Ribosomal RNA small subunit methyltransferase H of Acidiphilium cryptum (strain JF-5).